The sequence spans 493 residues: Probable UTP--glucose-1-phosphate uridylyltransferase (493 aa).

UTP is bound by residues 105–108 (LTGK), Gln181, Gly211, and Asp242. Position 107-108 (107-108 (GK)) interacts with substrate. Residue 240 to 242 (NVD) participates in substrate binding.

Belongs to the UDPGP type 1 family.

It carries out the reaction alpha-D-glucose 1-phosphate + UTP + H(+) = UDP-alpha-D-glucose + diphosphate. Its function is as follows. Plays a central role as a glucosyl donor in cellular metabolic pathways. The polypeptide is Probable UTP--glucose-1-phosphate uridylyltransferase (Saccharomyces cerevisiae (strain ATCC 204508 / S288c) (Baker's yeast)).